We begin with the raw amino-acid sequence, 432 residues long: Enolase (432 aa).

Position 163 (glutamine 163) interacts with (2R)-2-phosphoglycerate. The active-site Proton donor is glutamate 205. 3 residues coordinate Mg(2+): aspartate 242, glutamate 285, and aspartate 312. Lysine 337, arginine 366, serine 367, and lysine 388 together coordinate (2R)-2-phosphoglycerate. The Proton acceptor role is filled by lysine 337.

The protein belongs to the enolase family. The cofactor is Mg(2+).

It localises to the cytoplasm. The protein localises to the secreted. It is found in the cell surface. The enzyme catalyses (2R)-2-phosphoglycerate = phosphoenolpyruvate + H2O. Its pathway is carbohydrate degradation; glycolysis; pyruvate from D-glyceraldehyde 3-phosphate: step 4/5. In terms of biological role, catalyzes the reversible conversion of 2-phosphoglycerate (2-PG) into phosphoenolpyruvate (PEP). It is essential for the degradation of carbohydrates via glycolysis. This is Enolase from Desulfovibrio desulfuricans (strain ATCC 27774 / DSM 6949 / MB).